The primary structure comprises 196 residues: Peptidyl-tRNA hydrolase (196 aa).

His-15 is a tRNA binding site. The Proton acceptor role is filled by His-20. Positions 66, 68, and 114 each coordinate tRNA.

It belongs to the PTH family. In terms of assembly, monomer.

Its subcellular location is the cytoplasm. The enzyme catalyses an N-acyl-L-alpha-aminoacyl-tRNA + H2O = an N-acyl-L-amino acid + a tRNA + H(+). Functionally, hydrolyzes ribosome-free peptidyl-tRNAs (with 1 or more amino acids incorporated), which drop off the ribosome during protein synthesis, or as a result of ribosome stalling. In terms of biological role, catalyzes the release of premature peptidyl moieties from peptidyl-tRNA molecules trapped in stalled 50S ribosomal subunits, and thus maintains levels of free tRNAs and 50S ribosomes. The sequence is that of Peptidyl-tRNA hydrolase from Polynucleobacter asymbioticus (strain DSM 18221 / CIP 109841 / QLW-P1DMWA-1) (Polynucleobacter necessarius subsp. asymbioticus).